A 298-amino-acid chain; its full sequence is ATP phosphoribosyltransferase (298 aa).

It belongs to the ATP phosphoribosyltransferase family. Long subfamily. Requires Mg(2+) as cofactor.

It is found in the cytoplasm. It carries out the reaction 1-(5-phospho-beta-D-ribosyl)-ATP + diphosphate = 5-phospho-alpha-D-ribose 1-diphosphate + ATP. It participates in amino-acid biosynthesis; L-histidine biosynthesis; L-histidine from 5-phospho-alpha-D-ribose 1-diphosphate: step 1/9. Feedback inhibited by histidine. Catalyzes the condensation of ATP and 5-phosphoribose 1-diphosphate to form N'-(5'-phosphoribosyl)-ATP (PR-ATP). Has a crucial role in the pathway because the rate of histidine biosynthesis seems to be controlled primarily by regulation of HisG enzymatic activity. The sequence is that of ATP phosphoribosyltransferase from Aeromonas salmonicida (strain A449).